The following is a 676-amino-acid chain: RNA helicase NPH-II (676 aa).

Residues 172-347 (FSAWISHRPV…VFLPNPAFIH (176 aa)) form the Helicase ATP-binding domain. 185–192 (GGTGVGKT) is an ATP binding site. The DEXH box signature appears at 296–299 (DEVH). In terms of domain architecture, Helicase C-terminal spans 366 to 535 (NPSSRMAYIE…NYILYANKFN (170 aa)).

It belongs to the DEAD box helicase family. DEAH subfamily. In terms of assembly, monomer.

The protein localises to the virion. The catalysed reaction is ATP + H2O = ADP + phosphate + H(+). NTP-dependent helicase that catalyzes unidirectional unwinding of 3'tailed duplex RNAs and plays an important role during transcription of early mRNAs, presumably by preventing R-loop formation behind the elongating RNA polymerase. Might also play a role in the export of newly synthesized mRNA chains out of the core into the cytoplasm. Required for replication and propagation of viral particles. This Bos taurus (Bovine) protein is RNA helicase NPH-II (OPG084).